The sequence spans 95 residues: Large ribosomal subunit protein uL23c (95 aa).

It belongs to the universal ribosomal protein uL23 family. Part of the 50S ribosomal subunit.

The protein localises to the plastid. The protein resides in the chloroplast. In terms of biological role, binds to 23S rRNA. The chain is Large ribosomal subunit protein uL23c (rpl23) from Guillardia theta (Cryptophyte).